Reading from the N-terminus, the 233-residue chain is Small ribosomal subunit protein uS3 (233 aa).

The KH type-2 domain maps to 39-107 (VREFLKAKLK…PVHVNIEEVR (69 aa)). A disordered region spans residues 209-233 (PGQVSAEPTQPEKKMRKGGRNAAAN).

The protein belongs to the universal ribosomal protein uS3 family. As to quaternary structure, part of the 30S ribosomal subunit. Forms a tight complex with proteins S10 and S14.

Its function is as follows. Binds the lower part of the 30S subunit head. Binds mRNA in the 70S ribosome, positioning it for translation. The polypeptide is Small ribosomal subunit protein uS3 (Laribacter hongkongensis (strain HLHK9)).